Consider the following 632-residue polypeptide: Chaperone protein DnaK (632 aa).

A Phosphothreonine; by autocatalysis modification is found at threonine 198.

Belongs to the heat shock protein 70 family.

In terms of biological role, acts as a chaperone. The sequence is that of Chaperone protein DnaK from Rhodopseudomonas palustris (strain BisB18).